A 464-amino-acid chain; its full sequence is Cysteine--tRNA ligase 1 (464 aa).

Position 28 (C28) interacts with Zn(2+). A 'HIGH' region motif is present at residues 30 to 40 (VTIYDLCHIGH). Zn(2+)-binding residues include C209, H234, and E238. The short motif at 266–270 (KMSKS) is the 'KMSKS' region element. An ATP-binding site is contributed by K269.

The protein belongs to the class-I aminoacyl-tRNA synthetase family. In terms of assembly, monomer. It depends on Zn(2+) as a cofactor.

The protein localises to the cytoplasm. It catalyses the reaction tRNA(Cys) + L-cysteine + ATP = L-cysteinyl-tRNA(Cys) + AMP + diphosphate. The sequence is that of Cysteine--tRNA ligase 1 from Photobacterium profundum (strain SS9).